The primary structure comprises 209 residues: Small ribosomal subunit protein uS4 (209 aa).

The S4 RNA-binding domain occupies 99 to 162 (RRLDNMVYRL…RKNNKIIEAM (64 aa)).

Belongs to the universal ribosomal protein uS4 family. In terms of assembly, part of the 30S ribosomal subunit. Contacts protein S5. The interaction surface between S4 and S5 is involved in control of translational fidelity.

Functionally, one of the primary rRNA binding proteins, it binds directly to 16S rRNA where it nucleates assembly of the body of the 30S subunit. With S5 and S12 plays an important role in translational accuracy. This is Small ribosomal subunit protein uS4 from Syntrophus aciditrophicus (strain SB).